A 513-amino-acid chain; its full sequence is 2-isopropylmalate synthase (513 aa).

Residues 5-268 (LIIFDTTLRD…DLRVDTSQIV (264 aa)) enclose the Pyruvate carboxyltransferase domain. Asp-14, His-202, His-204, and Asn-239 together coordinate Mn(2+). Residues 394-513 (RLLALSQHSE…SKAERVAAQG (120 aa)) form a regulatory domain region.

Belongs to the alpha-IPM synthase/homocitrate synthase family. LeuA type 1 subfamily. Homodimer. It depends on Mn(2+) as a cofactor.

The protein resides in the cytoplasm. The catalysed reaction is 3-methyl-2-oxobutanoate + acetyl-CoA + H2O = (2S)-2-isopropylmalate + CoA + H(+). It functions in the pathway amino-acid biosynthesis; L-leucine biosynthesis; L-leucine from 3-methyl-2-oxobutanoate: step 1/4. Its function is as follows. Catalyzes the condensation of the acetyl group of acetyl-CoA with 3-methyl-2-oxobutanoate (2-ketoisovalerate) to form 3-carboxy-3-hydroxy-4-methylpentanoate (2-isopropylmalate). The chain is 2-isopropylmalate synthase from Leptothrix cholodnii (strain ATCC 51168 / LMG 8142 / SP-6) (Leptothrix discophora (strain SP-6)).